We begin with the raw amino-acid sequence, 641 residues long: MNIRSNPDTTRPAVTTGALPSSQKIYVTPDAAPDLRVPLREIILSKEAAEPNLPVYDTTGPYTDPAITIDVNAGLKRPRTQWVLERGGVEQYQGREIKPIDNGNVSGEHAAAAFKAYHQPLRGVGDSPITQYEFARKGIITKEMIYVATRENLGRKQQLERAEAALADGESFGAAIPAFITPEFVRDEIARGRAIIPANINHGELEPMIIGRNFLTKINANIGNSAVTSSVEEEVDKMVWAIRWGADTVMDLSTGRNIHTTREWILRNAPIPIGTVPIYQALEKCDGDPVKLTWELYKDTLIEQCEQGVDYFTIHAGVRLAYIHLTANRVTGIVSRGGSIMAKWCLAHHQESFLYTHFDEICDLMRKYDVSFSLGDGLRPGSIADANDRAQFAELETLGELTKIAWDKGCQVMIEGPGHVPLHKIKINMDKQLKECGEAPFYTLGPLTTDIAPGYDHITSGIGAAMIGWFGCAMLCYVTPKEHLGLPDRNDVKVGVITYKIAAHASDLAKGHPAAQLRDDAVSRARFDFRWQDQFNLGLDPDTAKAFHDETLPKDAHKVAHFCSMCGPKFCSMKITQDVRDYAAGLGDNEKAALYPAGHVGMTISGVIEDGMAQMSAKFRDMGEELYLDAEKVKESNRALS.

Substrate contacts are provided by residues Asn-221, Met-250, Tyr-279, His-315, 335–337 (SRG), 376–379 (DGLR), and Glu-415. His-419 provides a ligand contact to Zn(2+). Position 442 (Tyr-442) interacts with substrate. His-483 provides a ligand contact to Zn(2+). The [4Fe-4S] cluster site is built by Cys-563, Cys-566, and Cys-571.

This sequence belongs to the ThiC family. Homodimer. Requires [4Fe-4S] cluster as cofactor.

It carries out the reaction 5-amino-1-(5-phospho-beta-D-ribosyl)imidazole + S-adenosyl-L-methionine = 4-amino-2-methyl-5-(phosphooxymethyl)pyrimidine + CO + 5'-deoxyadenosine + formate + L-methionine + 3 H(+). Its pathway is cofactor biosynthesis; thiamine diphosphate biosynthesis. Its function is as follows. Catalyzes the synthesis of the hydroxymethylpyrimidine phosphate (HMP-P) moiety of thiamine from aminoimidazole ribotide (AIR) in a radical S-adenosyl-L-methionine (SAM)-dependent reaction. The chain is Phosphomethylpyrimidine synthase from Rhodopseudomonas palustris (strain BisA53).